A 501-amino-acid polypeptide reads, in one-letter code: Lysine--tRNA ligase (501 aa).

Positions 410 and 417 each coordinate Mg(2+).

Belongs to the class-II aminoacyl-tRNA synthetase family. In terms of assembly, homodimer. Mg(2+) is required as a cofactor.

It is found in the cytoplasm. It carries out the reaction tRNA(Lys) + L-lysine + ATP = L-lysyl-tRNA(Lys) + AMP + diphosphate. The sequence is that of Lysine--tRNA ligase from Shewanella pealeana (strain ATCC 700345 / ANG-SQ1).